The chain runs to 117 residues: Photosystem II reaction center Psb28 protein (117 aa).

The protein belongs to the Psb28 family. As to quaternary structure, part of the photosystem II complex.

It is found in the cellular thylakoid membrane. The polypeptide is Photosystem II reaction center Psb28 protein (Prochlorococcus marinus subsp. pastoris (strain CCMP1986 / NIES-2087 / MED4)).